The chain runs to 754 residues: MIDTVEYAATTPDQPQPFAELGLREDEYQRVREILGRRPTDTELAMYSVMWSEHCSYKSSKVHLRYFGETTTEEMRTGMLAGIGENAGVVDIGDGWAVTFKVESHNHPSYVEPYQGAATGVGGIVRDIMAMGARPVAVMDQLRFGAADALDTRRVLDGVVRGIGGYGNSLGLPNIGGETVFDSCYDGNPLVNALCVGVLRQEDLHLAFASGAGNKIILFGACTGLDGIGGVSVLASDTFDAEGARKKLPSVQVGDPFMEKVLIECCLELYAGGLVIGIQDLGGAGLSCATSELASAGDVGMAIQLDTVPRRAKDMTPAEVFCSESQERMCAVVAPENVDAFLAVCRKWEVLATVIGEVTDGDRLRITWHGETVVDVPPRTVAHEGPVYQRPVSRPESQEALNADSSKGLPRPVSGDELRATLLALLGSPHLCSRAFITEQYDRYVRGNTVLAEHADAGVLRIDESTGRGIALSTDASGRYTRLDPYAGAQLALAEAYRNVAVTGATPVAVTNCLNFGSPEDPGVMWQFAQAVRGLADGCAALKIPVTGGNVSFYNQTGAVAILPTPVVGVLGVLDNVARRIHTSLGTEPGEILMLLGDTYDEFDGSVWAQVMAGHLGGLPPMVDLAREKLLAEVLSSASRDELVSAAHDLSEGGLAQAIVESALAGETGCRIALPEDADPFVMLFSESAGRVLVAVPRPEESRFRSMCEARGLPAMRIGVVDQGSDSIEVRGQFTVSLAELRMTFEAVLPRFFG.

His-54 is an active-site residue. Positions 57 and 101 each coordinate ATP. Glu-103 lines the Mg(2+) pocket. Substrate contacts are provided by residues 104–107 and Arg-126; that span reads SHNH. The active-site Proton acceptor is the His-105. Asp-127 serves as a coordination point for Mg(2+). Position 252 (Gln-252) interacts with substrate. A Mg(2+)-binding site is contributed by Asp-280. Residue 324 to 326 participates in substrate binding; that stretch reads ESQ. The disordered stretch occupies residues 386-412; sequence PVYQRPVSRPESQEALNADSSKGLPRP. Positions 512 and 549 each coordinate ATP. Asn-550 contributes to the Mg(2+) binding site. Substrate is bound at residue Ser-552.

The protein belongs to the FGAMS family. In terms of assembly, monomer. Part of the FGAM synthase complex composed of 1 PurL, 1 PurQ and 2 PurS subunits.

It localises to the cytoplasm. It carries out the reaction N(2)-formyl-N(1)-(5-phospho-beta-D-ribosyl)glycinamide + L-glutamine + ATP + H2O = 2-formamido-N(1)-(5-O-phospho-beta-D-ribosyl)acetamidine + L-glutamate + ADP + phosphate + H(+). The protein operates within purine metabolism; IMP biosynthesis via de novo pathway; 5-amino-1-(5-phospho-D-ribosyl)imidazole from N(2)-formyl-N(1)-(5-phospho-D-ribosyl)glycinamide: step 1/2. Part of the phosphoribosylformylglycinamidine synthase complex involved in the purines biosynthetic pathway. Catalyzes the ATP-dependent conversion of formylglycinamide ribonucleotide (FGAR) and glutamine to yield formylglycinamidine ribonucleotide (FGAM) and glutamate. The FGAM synthase complex is composed of three subunits. PurQ produces an ammonia molecule by converting glutamine to glutamate. PurL transfers the ammonia molecule to FGAR to form FGAM in an ATP-dependent manner. PurS interacts with PurQ and PurL and is thought to assist in the transfer of the ammonia molecule from PurQ to PurL. In Mycobacterium leprae (strain Br4923), this protein is Phosphoribosylformylglycinamidine synthase subunit PurL.